We begin with the raw amino-acid sequence, 413 residues long: Serine/threonine-protein phosphatase 7 (413 aa).

A disulfide bridge links Cys28 with Cys67. Residues Asp84, His86, Asp113, and Asn145 each contribute to the Mn(2+) site. His146 acts as the Proton donor in catalysis. The Mn(2+) site is built by His197 and His303. The disordered stretch occupies residues 391–413 (NVIDSDDEMDKSAMDTNNEQPNS). The segment covering 404 to 413 (MDTNNEQPNS) has biased composition (polar residues).

The protein belongs to the PPP phosphatase family. PP-7 subfamily. As to quaternary structure, monomer, homodimer, and heteromer. Interacts with calmodulin (CaM3 and CaM4) and HSFA1A/HSF1. It depends on Mn(2+) as a cofactor. As to expression, expressed in leaves, and, to a lower extent, in stems and flowers.

The protein localises to the nucleus. It is found in the nucleoplasm. It catalyses the reaction O-phospho-L-seryl-[protein] + H2O = L-seryl-[protein] + phosphate. The catalysed reaction is O-phospho-L-threonyl-[protein] + H2O = L-threonyl-[protein] + phosphate. Its activity is regulated as follows. Inhibited by NaF and orthovanadate, as well as by divalent cations such as Ni(2+) and Zn(2+). Inhibited by polylysine with myelin basic protein as substrate, but activated by polylysine with pNPP as substrate. Reversibly regulated by redox agents. Inhibited by submillimolar Pi concentrations. Slightly repressed by calmodulin (CaM). In terms of biological role, phosphatase active on para-nitrophenylphosphate (pNPP) and on various phosphoproteins such as myelin basic protein. Seems to act as a positive regulator of cryptochrome signaling involved in hypocotyl growth inhibition and cotyledon expansion under white and blue light conditions. Confers thermotolerance. Required for heat shock mediated-signaling pathway that leads to the expression of heat shock proteins (HSPs). The polypeptide is Serine/threonine-protein phosphatase 7 (PP7) (Arabidopsis thaliana (Mouse-ear cress)).